The primary structure comprises 268 residues: Hydroxyethylthiazole kinase (268 aa).

Substrate is bound at residue M45. ATP contacts are provided by R121 and T167. Residue G194 coordinates substrate.

Belongs to the Thz kinase family. Mg(2+) serves as cofactor.

It catalyses the reaction 5-(2-hydroxyethyl)-4-methylthiazole + ATP = 4-methyl-5-(2-phosphooxyethyl)-thiazole + ADP + H(+). It participates in cofactor biosynthesis; thiamine diphosphate biosynthesis; 4-methyl-5-(2-phosphoethyl)-thiazole from 5-(2-hydroxyethyl)-4-methylthiazole: step 1/1. Its function is as follows. Catalyzes the phosphorylation of the hydroxyl group of 4-methyl-5-beta-hydroxyethylthiazole (THZ). The polypeptide is Hydroxyethylthiazole kinase (Bacillus thuringiensis (strain Al Hakam)).